Here is a 625-residue protein sequence, read N- to C-terminus: Procollagen galactosyltransferase 2 (625 aa).

A signal peptide spans Met-1–Ala-26. Asn-96, Asn-184, Asn-381, and Asn-579 each carry an N-linked (GlcNAc...) asparagine glycan. The interval Gln-597–Leu-625 is disordered. A Prevents secretion from ER motif is present at residues Arg-622 to Leu-625.

It belongs to the glycosyltransferase 25 family.

The protein localises to the endoplasmic reticulum lumen. It carries out the reaction (5R)-5-hydroxy-L-lysyl-[collagen] + UDP-alpha-D-galactose = (5R)-5-O-(beta-D-galactosyl)-5-hydroxy-L-lysyl-[collagen] + UDP + H(+). Its function is as follows. Beta-galactosyltransferase that transfers beta-galactose to hydroxylysine residues of collagen. The sequence is that of Procollagen galactosyltransferase 2 (Colgalt2) from Mus musculus (Mouse).